Here is a 189-residue protein sequence, read N- to C-terminus: Glutathione-dependent formaldehyde-activating enzyme (189 aa).

The CENP-V/GFA domain maps to 20–167 (FAGGTLVCKC…LKELGLEPYD (148 aa)). C27, C29, C48, C50, C53, C95, and C98 together coordinate Zn(2+).

Belongs to the Gfa family. It depends on Zn(2+) as a cofactor.

The catalysed reaction is S-(hydroxymethyl)glutathione = glutathione + formaldehyde. It functions in the pathway one-carbon metabolism; formaldehyde degradation; formate from formaldehyde (glutathione route): step 1/3. Functionally, catalyzes the condensation of formaldehyde and glutathione to S-hydroxymethylglutathione. This Rhodopseudomonas palustris (strain BisB18) protein is Glutathione-dependent formaldehyde-activating enzyme.